We begin with the raw amino-acid sequence, 146 residues long: Small ribosomal subunit protein bS16 (146 aa).

The segment at 119 to 146 is disordered; the sequence is GSENKGGKSKKAEEKSAEKTAEKSEGEA. Basic and acidic residues predominate over residues 128–146; that stretch reads KKAEEKSAEKTAEKSEGEA.

This sequence belongs to the bacterial ribosomal protein bS16 family.

This is Small ribosomal subunit protein bS16 from Thermobifida fusca (strain YX).